We begin with the raw amino-acid sequence, 185 residues long: Peptide deformylase (185 aa).

Fe cation contacts are provided by cysteine 94 and histidine 136. Residue glutamate 137 is part of the active site. Histidine 140 provides a ligand contact to Fe cation.

The protein belongs to the polypeptide deformylase family. Requires Fe(2+) as cofactor.

It carries out the reaction N-terminal N-formyl-L-methionyl-[peptide] + H2O = N-terminal L-methionyl-[peptide] + formate. Functionally, removes the formyl group from the N-terminal Met of newly synthesized proteins. Requires at least a dipeptide for an efficient rate of reaction. N-terminal L-methionine is a prerequisite for activity but the enzyme has broad specificity at other positions. This chain is Peptide deformylase, found in Chlorobium limicola (strain DSM 245 / NBRC 103803 / 6330).